We begin with the raw amino-acid sequence, 342 residues long: MTTLTITRPDDWHLHLRDGDVLTDTVRDSGRYNGRALIMPNLVPPVTTTEQALSYRERIQAENKSDSFAPLMSLYLTEKTTSEEIRKAKATGHIVAAKLYPAGATTNSDSGVSDVKNVYPILKTMQEEGMLLLIHGEVTTHDIDIFDREKTFLDTVLAPIVNDFPELKIVLEHITTKDAADFVKNAGPNVAATITAHHLLFNRNHMLVGGIKPHFYCLPILKRNTHQQALVEAATSGNPKFFLGTDSAPHAKDKKEAACGCAGSYTAHASIELYAEVFENEGKLENLEAFASFNGPDFYNLPRNTDTITLVKEAWIAPETMAFGNDFVVPIRAGEAVEWLVK.

2 residues coordinate Zn(2+): histidine 13 and histidine 15. Residues 15–17 (HLR) and asparagine 41 each bind substrate. Zn(2+) is bound by residues lysine 98, histidine 135, and histidine 173. Lysine 98 carries the N6-carboxylysine modification. Position 135 (histidine 135) interacts with substrate. Substrate is bound at residue leucine 218. Residue aspartate 246 participates in Zn(2+) binding. Aspartate 246 is a catalytic residue. Substrate contacts are provided by histidine 250 and alanine 262.

Belongs to the metallo-dependent hydrolases superfamily. DHOase family. Class II DHOase subfamily. In terms of assembly, homodimer. It depends on Zn(2+) as a cofactor.

It catalyses the reaction (S)-dihydroorotate + H2O = N-carbamoyl-L-aspartate + H(+). It participates in pyrimidine metabolism; UMP biosynthesis via de novo pathway; (S)-dihydroorotate from bicarbonate: step 3/3. In terms of biological role, catalyzes the reversible cyclization of carbamoyl aspartate to dihydroorotate. The polypeptide is Dihydroorotase (Aliivibrio fischeri (strain ATCC 700601 / ES114) (Vibrio fischeri)).